Reading from the N-terminus, the 254-residue chain is Nickel import ATP-binding protein NikD (254 aa).

An ABC transporter domain is found at 2-241 (PQQIELRNIA…PKHTVTRSLV (240 aa)). 36–43 (GGSGSGKS) is an ATP binding site.

The protein belongs to the ABC transporter superfamily. Nickel importer (TC 3.A.1.5.3) family. In terms of assembly, the complex is composed of two ATP-binding proteins (NikD and NikE), two transmembrane proteins (NikB and NikC) and a solute-binding protein (NikA).

Its subcellular location is the cell inner membrane. It catalyses the reaction Ni(2+)(out) + ATP + H2O = Ni(2+)(in) + ADP + phosphate + H(+). Part of the ABC transporter complex NikABCDE involved in nickel import. Responsible for energy coupling to the transport system. In Escherichia coli (strain K12), this protein is Nickel import ATP-binding protein NikD.